A 255-amino-acid polypeptide reads, in one-letter code: Adenylate dimethylallyltransferase (255 aa).

Belongs to the isopentenyl transferase family.

It carries out the reaction dimethylallyl diphosphate + AMP = N(6)-(dimethylallyl)adenosine 5'-phosphate + diphosphate. Functionally, transfers dimethylallyl groups to AMP as part of the biosynthesis of cytokinin phytohormones. In Rhodococcoides fascians (Rhodococcus fascians), this protein is Adenylate dimethylallyltransferase (fas4).